Here is a 330-residue protein sequence, read N- to C-terminus: Phosphate acyltransferase (330 aa).

Belongs to the PlsX family. As to quaternary structure, homodimer. Probably interacts with PlsY.

It localises to the cytoplasm. The enzyme catalyses a fatty acyl-[ACP] + phosphate = an acyl phosphate + holo-[ACP]. It participates in lipid metabolism; phospholipid metabolism. Its function is as follows. Catalyzes the reversible formation of acyl-phosphate (acyl-PO(4)) from acyl-[acyl-carrier-protein] (acyl-ACP). This enzyme utilizes acyl-ACP as fatty acyl donor, but not acyl-CoA. The polypeptide is Phosphate acyltransferase (Bacillus cereus (strain B4264)).